The following is a 215-amino-acid chain: Fibroblast growth factor 17 (215 aa).

An N-terminal signal peptide occupies residues 1–22; it reads MYGINQRYLYISFHFFVVWCHA. Residue N137 is glycosylated (N-linked (GlcNAc...) asparagine).

The protein belongs to the heparin-binding growth factors family.

The protein resides in the secreted. In terms of biological role, involved in dorsal-ventral embryonic patterning, by promoting expression of bone morphogenetic protein (BMP) antagonists such as chd. Also involved in anterior-posterior neural patterning and in mesoderm induction. The sequence is that of Fibroblast growth factor 17 (fgf17) from Danio rerio (Zebrafish).